The chain runs to 168 residues: MRTQSLKPYHANYHSLTTNDSPARVDAPTDSGLISEFVYSENQPVVTQLLLPLLQQLSKQSRWLLWLTPQQKLSRSWLKQSGLPINKVVQLRQINPLSTVEAMEKALLTGNYSVVLGWLPELTEDDRIRLRLAAKLGNAYGFVMRPLNDTKVGSGQCATLKIHSYLYH.

Positions 106–112 (ALLTGNY) are ftsZ binding. The tract at residues 161-168 (KIHSYLYH) is lon protease binding.

Belongs to the SulA family. In terms of assembly, interacts with FtsZ. In terms of processing, is rapidly cleaved and degraded by the Lon protease once DNA damage is repaired.

In terms of biological role, component of the SOS system and an inhibitor of cell division. Accumulation of SulA causes rapid cessation of cell division and the appearance of long, non-septate filaments. In the presence of GTP, binds a polymerization-competent form of FtsZ in a 1:1 ratio, thus inhibiting FtsZ polymerization and therefore preventing it from participating in the assembly of the Z ring. This mechanism prevents the premature segregation of damaged DNA to daughter cells during cell division. The chain is Cell division inhibitor SulA from Yersinia pseudotuberculosis serotype O:1b (strain IP 31758).